A 1571-amino-acid chain; its full sequence is MSGTFHGDGHAPMSPFEDTFQFEDNSSNEDTHIAPTHFDDGATSNKYSRPQVSFNDETPKNKREDAEEFTFNDDTEYDNHSFQPTPKLNNGSGTFDDVELDNDSGEPHTNYDGMKRFRMGTKRNKKGNPIMGRSKTLKWARKNIPNPFEDFTKDDIDPGAINRAQELRTVYYNMPLPKDMIDEEGNPIMQYPRNKIRTTKYTPLTFLPKNILFQFHNFANVYFLVLIILGAFQIFGVTNPGLSAVPLVVIVIITAIKDAIEDSRRTVLDLEVNNTKTHILEGVENENVSTDNISLWRRFKKANSRLLFKFIQYCKEHLTEEGKKKRMQRKRHELRVQKTVGTSGPRSSLDSIDSYRVSADYGRPSLDYDNLEQGAGEANIVDRSLPPRTDCKFAKNYWKGVKVGDIVRIHNNDEIPADIILLSTSDTDGACYVETKNLDGETNLKVRQSLKCTNTIRTSKDIARTKFWIESEGPHSNLYTYQGNMKWRNLADGEIRNEPITINNVLLRGCTLRNTKWAMGVVMFTGGDTKIMLNSGITPTKKSRISRELNFSVVINFVLLFILCFVSGIANGVYYDKKGRSRFSYEFGTIAGSAATNGFVSFWVAVILYQSLVPISLYISVEIIKTAQAAFIYGDVLLYNAKLDYPCTPKSWNISDDLGQVEYIFSDKTGTLTQNVMEFKKCTINGVSYGRAYTEALAGLRKRQGIDVETEGRREKAEIAKDRDTMIDELRALSGNSQFYPEEVTFVSKEFVRDLKGASGEVQQRCCEHFMLALALCHSVLVEANPDNPKKLDLKAQSPDEAALVATARDVGFSFVGKTKKGLIIEMQGIQKEFEILNILEFNSSRKRMSCIVKIPGLNPGDEPRALLICKGADSIIYSRLSRQSGSNSEAILEKTALHLEQYATEGLRTLCIAQRELSWSEYEKWNEKYDIAAASLANREDELEVVADSIERELILLGGTAIEDRLQDGVPDCIELLAEAGIKLWVLTGDKVETAINIGFSCNLLNNEMELLVIKTTGDDVKEFGSEPSEIVDALLSKYLKEYFNLTGSEEEIFEAKKDHEFPKGNYAIVIDGDALKLALYGEDIRRKFLLLCKNCRAVLCCRVSPSQKAAVVKLVKDSLDVMTLAIGDGSNDVAMIQSADVGIGIAGEEGRQAVMCSDYAIGQFRYLARLVLVHGRWSYKRLAEMIPEFFYKNMIFALALFWYGIYNDFDGSYLYEYTYMMFYNLAFTSLPVIFLGILDQDVNDTISLVVPQLYRVGILRKEWNQRKFLWYMLDGLYQSIICFFFPYLVYHKNMIVTSNGLGLDHRYFVGVYVTTIAVISCNTYVLLHQYRWDWFSGLFIALSCLVVFAWTGIWSSAIASREFFKAAARIYGAPSFWAVFFVAVLFCLLPRFTYDSFQKFFYPTDVEIVREMWQHGHFDHYPPGYDPTDPNRPKVTKAGQHGEKIIEGIALSDNLGGSNYSRDSVVTEEIPMTFMHGEDGSPSGYQKQETWMTSPKETQDLLQSPQFQQAQTFGRGPSTNVRSSLDRTREQMIATNQLDNRYSVERARTSLDLPGVTNAASLIGTQQNN.

The interval 1–94 is disordered; that stretch reads MSGTFHGDGH…TPKLNNGSGT (94 aa). Over 1–214 the chain is Cytoplasmic; sequence MSGTFHGDGH…TFLPKNILFQ (214 aa). The span at 29–40 shows a compositional bias: basic and acidic residues; the sequence is EDTHIAPTHFDD. Over residues 42-56 the composition is skewed to polar residues; that stretch reads ATSNKYSRPQVSFND. Phosphoserine is present on serine 53. Over residues 66-76 the composition is skewed to acidic residues; the sequence is AEEFTFNDDTE. Threonine 70 carries the phosphothreonine modification. The segment covering 80-93 has biased composition (polar residues); that stretch reads HSFQPTPKLNNGSG. The residue at position 81 (serine 81) is a Phosphoserine. At threonine 85 the chain carries Phosphothreonine. A Phosphoserine modification is found at serine 92. Threonine 94 is subject to Phosphothreonine. Serine 104 carries the post-translational modification Phosphoserine. Threonine 109 bears the Phosphothreonine mark. A helical transmembrane segment spans residues 215–235; the sequence is FHNFANVYFLVLIILGAFQIF. The tract at residues 234–241 is involved in phosphatidylcholine substrate selection; it reads IFGVTNPG. Residues 236–239 lie on the Extracellular side of the membrane; the sequence is GVTN. The helical transmembrane segment at 240-260 threads the bilayer; that stretch reads PGLSAVPLVVIVIITAIKDAI. Topologically, residues 261–553 are cytoplasmic; that stretch reads EDSRRTVLDL…RISRELNFSV (293 aa). Phosphoserine is present on residues serine 351, serine 354, serine 358, and serine 365. A Phosphotyrosine modification is found at tyrosine 368. The chain crosses the membrane as a helical span at residues 554-574; sequence VINFVLLFILCFVSGIANGVY. Topologically, residues 575–594 are extracellular; sequence YDKKGRSRFSYEFGTIAGSA. Residues 586–590 form an involved in phosphatidylcholine substrate selection region; the sequence is EFGTI. The helical transmembrane segment at 595-615 threads the bilayer; it reads ATNGFVSFWVAVILYQSLVPI. Residues 616-1188 lie on the Cytoplasmic side of the membrane; it reads SLYISVEIIK…WSYKRLAEMI (573 aa). Residue aspartate 667 is the 4-aspartylphosphate intermediate of the active site. ATP-binding residues include aspartate 667, lysine 668, threonine 669, glutamate 801, phenylalanine 842, serine 844, lysine 847, and lysine 871. Aspartate 667 provides a ligand contact to Mg(2+). Threonine 669 provides a ligand contact to Mg(2+). A Glycyl lysine isopeptide (Lys-Gly) (interchain with G-Cter in ubiquitin) cross-link involves residue lysine 895. Positions 909, 910, 989, 990, 991, 1104, and 1110 each coordinate ATP. Mg(2+) is bound at residue aspartate 1130. ATP is bound by residues asparagine 1133 and aspartate 1134. A Mg(2+)-binding site is contributed by aspartate 1134. Residues 1189–1209 form a helical membrane-spanning segment; sequence PEFFYKNMIFALALFWYGIYN. Topologically, residues 1210–1219 are extracellular; it reads DFDGSYLYEY. The helical transmembrane segment at 1220 to 1240 threads the bilayer; that stretch reads TYMMFYNLAFTSLPVIFLGIL. Residues 1241–1270 lie on the Cytoplasmic side of the membrane; sequence DQDVNDTISLVVPQLYRVGILRKEWNQRKF. The helical transmembrane segment at 1271–1291 threads the bilayer; it reads LWYMLDGLYQSIICFFFPYLV. The Extracellular portion of the chain corresponds to 1292–1307; that stretch reads YHKNMIVTSNGLGLDH. Residues 1308–1328 form a helical membrane-spanning segment; it reads RYFVGVYVTTIAVISCNTYVL. The Cytoplasmic segment spans residues 1329–1334; the sequence is LHQYRW. Residues 1335–1355 form a helical membrane-spanning segment; sequence DWFSGLFIALSCLVVFAWTGI. Residues 1356–1375 are Extracellular-facing; the sequence is WSSAIASREFFKAAARIYGA. Residues 1376–1396 traverse the membrane as a helical segment; the sequence is PSFWAVFFVAVLFCLLPRFTY. Arginine 1393 contacts a 1,2-diacyl-sn-glycero-3-phospho-L-serine. Residues 1397 to 1571 lie on the Cytoplasmic side of the membrane; the sequence is DSFQKFFYPT…ASLIGTQQNN (175 aa). Serine 1506 carries the post-translational modification Phosphoserine. Threonine 1551 is subject to Phosphothreonine. A phosphoserine mark is found at serine 1552 and serine 1563.

The protein belongs to the cation transport ATPase (P-type) (TC 3.A.3) family. Type IV subfamily. Component of a flippase complex consisting of DNF1 and LEM3. Interacts with LEM3; the interaction is direct and required for their mutual export from the endoplasmic reticulum. It depends on Mg(2+) as a cofactor. Phosphorylated by FPK1 and KIN82.

It is found in the cell membrane. The protein localises to the endosome membrane. It localises to the golgi apparatus. Its subcellular location is the trans-Golgi network membrane. The protein resides in the cell septum. It is found in the bud. It catalyses the reaction ATP + H2O + phospholipidSide 1 = ADP + phosphate + phospholipidSide 2.. The catalysed reaction is a 1,2-diacyl-sn-glycero-3-phosphoethanolamine(out) + ATP + H2O = a 1,2-diacyl-sn-glycero-3-phosphoethanolamine(in) + ADP + phosphate + H(+). The enzyme catalyses a 1,2-diacyl-sn-glycero-3-phosphocholine(out) + ATP + H2O = a 1,2-diacyl-sn-glycero-3-phosphocholine(in) + ADP + phosphate + H(+). It carries out the reaction a beta-D-glucosyl-(1&lt;-&gt;1')-N-acylsphing-4-enine(out) + ATP + H2O = a beta-D-glucosyl-(1&lt;-&gt;1')-N-acylsphing-4-enine(in) + ADP + phosphate + H(+). It catalyses the reaction a 1,2-diacyl-sn-glycero-3-phospho-L-serine(out) + ATP + H2O = a 1,2-diacyl-sn-glycero-3-phospho-L-serine(in) + ADP + phosphate + H(+). In terms of biological role, catalytic component of a P4-ATPase flippase complex which catalyzes the hydrolysis of ATP coupled to the transport of glucosylceramide, phosphatidylcholine, phosphatidylethanolamine, and small amounts of phosphatidylserine from the lumenal to the cytosolic leaflet of the cell membrane and ensures the maintenance of asymmetric distribution of phospholipids. Does not appear to transport sphingomyelin, inositol phosphoceramide, or phosphatidic acid. Required for efficient endocytosis. The chain is Phospholipid-transporting ATPase DNF1 from Saccharomyces cerevisiae (strain ATCC 204508 / S288c) (Baker's yeast).